A 755-amino-acid polypeptide reads, in one-letter code: Tryptophan 2-monooxygenase (755 aa).

4 residues coordinate FMN: Ser247, Glu267, Lys275, and Arg295. Arg295 serves as a coordination point for substrate.

The protein belongs to the tryptophan 2-monooxygenase family. FMN serves as cofactor.

It catalyses the reaction L-tryptophan + O2 = indole-3-acetamide + CO2 + H2O. The protein operates within plant hormone metabolism; auxin biosynthesis. This chain is Tryptophan 2-monooxygenase (tms1), found in Agrobacterium tumefaciens (strain Ach5).